The primary structure comprises 313 residues: D-alanine--D-alanine ligase (313 aa).

Positions 114-309 (KWLWKGVGLP…FSKLVLKLIS (196 aa)) constitute an ATP-grasp domain. 142–195 (DLTFPVIVKPSHEGSSIGMRKVDTLDALQEAVDFAQQYDSEILIEQWITGREFT) is a binding site for ATP. Mg(2+) is bound by residues Asp-263, Glu-276, and Asn-278.

This sequence belongs to the D-alanine--D-alanine ligase family. It depends on Mg(2+) as a cofactor. The cofactor is Mn(2+).

The protein resides in the cytoplasm. It carries out the reaction 2 D-alanine + ATP = D-alanyl-D-alanine + ADP + phosphate + H(+). It participates in cell wall biogenesis; peptidoglycan biosynthesis. In terms of biological role, cell wall formation. In Hydrogenovibrio crunogenus (strain DSM 25203 / XCL-2) (Thiomicrospira crunogena), this protein is D-alanine--D-alanine ligase.